The following is a 763-amino-acid chain: Exo-1,4-beta-xylosidase bxlB (763 aa).

An N-terminal signal peptide occupies residues 1-23; sequence MAVFKSWNLALLSSLFIPALCQS. Residue Asn-63 is glycosylated (N-linked (GlcNAc...) asparagine). The active site involves Asp-288. Asn-340, Asn-408, Asn-419, Asn-458, Asn-621, and Asn-760 each carry an N-linked (GlcNAc...) asparagine glycan.

It belongs to the glycosyl hydrolase 3 family.

The protein localises to the secreted. The catalysed reaction is Hydrolysis of (1-&gt;4)-beta-D-xylans, to remove successive D-xylose residues from the non-reducing termini.. It functions in the pathway glycan degradation; xylan degradation. Its function is as follows. Xylan 1,4-beta-xylosidase involved in the hydrolysis of xylan, a major structural heterogeneous polysaccharide found in plant biomass representing the second most abundant polysaccharide in the biosphere, after cellulose. Active against rye arabinoxylan and xylohexaose, but not paranitrophenyl-beta-xyloside. In Emericella nidulans (strain FGSC A4 / ATCC 38163 / CBS 112.46 / NRRL 194 / M139) (Aspergillus nidulans), this protein is Exo-1,4-beta-xylosidase bxlB (bxlB).